Reading from the N-terminus, the 495-residue chain is ATP synthase subunit beta, chloroplastic (495 aa).

An ATP-binding site is contributed by 172-179 (GGAGVGKT).

The protein belongs to the ATPase alpha/beta chains family. In terms of assembly, F-type ATPases have 2 components, CF(1) - the catalytic core - and CF(0) - the membrane proton channel. CF(1) has five subunits: alpha(3), beta(3), gamma(1), delta(1), epsilon(1). CF(0) has four main subunits: a(1), b(1), b'(1) and c(9-12).

It localises to the plastid. The protein resides in the chloroplast thylakoid membrane. It carries out the reaction ATP + H2O + 4 H(+)(in) = ADP + phosphate + 5 H(+)(out). Produces ATP from ADP in the presence of a proton gradient across the membrane. The catalytic sites are hosted primarily by the beta subunits. In Eucomis bicolor (King's flower), this protein is ATP synthase subunit beta, chloroplastic.